The primary structure comprises 401 residues: Serine/threonine transporter SstT (401 aa).

The next 8 helical transmembrane spans lie at 17–37, 40–60, 78–98, 138–158, 179–199, 212–232, 295–315, and 336–356; these read IGIG…ITVI, FGSL…LTLV, VICL…GASY, ALAT…GLAF, VVGW…FDTI, LLLL…NPLI, MAGA…TLGI, and ASGV…LFGI.

Belongs to the dicarboxylate/amino acid:cation symporter (DAACS) (TC 2.A.23) family.

It is found in the cell membrane. It carries out the reaction L-serine(in) + Na(+)(in) = L-serine(out) + Na(+)(out). The catalysed reaction is L-threonine(in) + Na(+)(in) = L-threonine(out) + Na(+)(out). Functionally, involved in the import of serine and threonine into the cell, with the concomitant import of sodium (symport system). This is Serine/threonine transporter SstT from Streptococcus suis (strain 98HAH33).